A 292-amino-acid polypeptide reads, in one-letter code: Protein CHLOROPLAST ENHANCING STRESS TOLERANCE, chloroplastic (292 aa).

Positions 1–15 are enriched in pro residues; it reads MALLSPPSPPPPLPP. The transit peptide at 1–67 directs the protein to the chloroplast; the sequence is MALLSPPSPP…RSSRRRRRVA (67 aa). 2 disordered regions span residues 1–119 and 206–225; these read MALL…DLED and MEAP…KATD. 2 stretches are compositionally biased toward low complexity: residues 49–58 and 94–107; these read STANARAYSR and ASSD…ASSA. The chain crosses the membrane as a helical span at residues 267–287; the sequence is ALYLLTAFPVIIGISVVLILF.

The protein belongs to the Y3IP1/CEST family.

It localises to the plastid. The protein localises to the chloroplast thylakoid membrane. In terms of biological role, involved in light-induced chloroplast development and growth. Involved in the plant response to abiotic and photooxidative stresses. May be involved in the suppression of photooxidative damage. The polypeptide is Protein CHLOROPLAST ENHANCING STRESS TOLERANCE, chloroplastic (Oryza sativa subsp. indica (Rice)).